An 858-amino-acid polypeptide reads, in one-letter code: Potassium channel KOR1 (858 aa).

Positions 1–41 are disordered; it reads MGRGIGSKRRVEDDDGENMPGRKKKEEEEEEEDDDGEEEYE. At 1 to 102 the chain is on the cytoplasmic side; that stretch reads MGRGIGSKRR…PDNKWYRLWT (102 aa). Over residues 27–41 the composition is skewed to acidic residues; that stretch reads EEEEEEDDDGEEEYE. A helical membrane pass occupies residues 103 to 123; it reads RFILVWAVYSSFFTPLEFGFF. Topologically, residues 124–130 are extracellular; the sequence is RGLPRNL. A helical membrane pass occupies residues 131–151; that stretch reads FFLDIAGQIAFLIDIVLRFFV. Over 152–174 the chain is Cytoplasmic; the sequence is AYRDPDTYRMVHNPTSIALRYCK. Residues 175-195 form a helical membrane-spanning segment; it reads SSFIFDLLGCFPWDAIYKACG. At 196–201 the chain is on the extracellular side; the sequence is SKEEVR. The helical; Voltage-sensor transmembrane segment at 202–222 threads the bilayer; that stretch reads YLLWIRLTRAMKVTEFFRSME. Over 223–236 the chain is Cytoplasmic; sequence KDIRINYLFTRIVK. A helical transmembrane segment spans residues 237-257; it reads LIVVELYCTHTAACIFYYLAT. Residues 258 to 292 lie on the Extracellular side of the membrane; it reads TLPESMEGYTWIGSLQLGDYSYSHFREIDLTKRYM. Positions 293-312 form an intramembrane region, pore-forming; it reads TSLYFAIVTMATVGYGDIHA. At 313-316 the chain is on the extracellular side; that stretch reads VNVR. The chain crosses the membrane as a helical span at residues 317-337; the sequence is EMIFIMIYVSFDMILGAYLIG. At 338–858 the chain is on the cytoplasmic side; sequence NMTALIVKGS…GDDGGTEARQ (521 aa). 419–539 serves as a coordination point for a nucleoside 3',5'-cyclic phosphate; it reads LFKGCSAEFI…RRILSNLSES (121 aa). ANK repeat units lie at residues 559-592, 596-625, 629-658, 660-689, 693-722, and 726-756; these read KQEA…DPKN, DGRS…DIDL, FGNT…KLSL, NAGS…DPNA, DHRA…SVFA, and WGTT…ELSR. Residues 772–858 enclose the KHA domain; the sequence is RCSVFPHHPW…GDDGGTEARQ (87 aa).

Belongs to the potassium channel family. Plant (TC 1.A.1.4) subfamily.

It is found in the membrane. Functionally, probable outward-rectifying potassium channel. The chain is Potassium channel KOR1 from Oryza sativa subsp. japonica (Rice).